We begin with the raw amino-acid sequence, 275 residues long: 2,3,4,5-tetrahydropyridine-2,6-dicarboxylate N-succinyltransferase (275 aa).

Arg-106 and Asp-143 together coordinate substrate.

This sequence belongs to the transferase hexapeptide repeat family. As to quaternary structure, homotrimer.

It localises to the cytoplasm. The catalysed reaction is (S)-2,3,4,5-tetrahydrodipicolinate + succinyl-CoA + H2O = (S)-2-succinylamino-6-oxoheptanedioate + CoA. It functions in the pathway amino-acid biosynthesis; L-lysine biosynthesis via DAP pathway; LL-2,6-diaminopimelate from (S)-tetrahydrodipicolinate (succinylase route): step 1/3. In Pelagibacter ubique (strain HTCC1062), this protein is 2,3,4,5-tetrahydropyridine-2,6-dicarboxylate N-succinyltransferase.